A 361-amino-acid polypeptide reads, in one-letter code: Peptide chain release factor 1 (361 aa).

Residue Q236 is modified to N5-methylglutamine.

It belongs to the prokaryotic/mitochondrial release factor family. Post-translationally, methylated by PrmC. Methylation increases the termination efficiency of RF1.

It is found in the cytoplasm. Its function is as follows. Peptide chain release factor 1 directs the termination of translation in response to the peptide chain termination codons UAG and UAA. The protein is Peptide chain release factor 1 of Lactobacillus acidophilus (strain ATCC 700396 / NCK56 / N2 / NCFM).